A 461-amino-acid chain; its full sequence is Cysteine--tRNA ligase (461 aa).

C28 serves as a coordination point for Zn(2+). The short motif at 30–40 is the 'HIGH' region element; it reads ITIYDLCHIGH. Residues C209, H234, and E238 each contribute to the Zn(2+) site. Positions 266–270 match the 'KMSKS' region motif; that stretch reads KMSKS. K269 provides a ligand contact to ATP.

It belongs to the class-I aminoacyl-tRNA synthetase family. In terms of assembly, monomer. Requires Zn(2+) as cofactor.

Its subcellular location is the cytoplasm. It carries out the reaction tRNA(Cys) + L-cysteine + ATP = L-cysteinyl-tRNA(Cys) + AMP + diphosphate. This Yersinia enterocolitica serotype O:8 / biotype 1B (strain NCTC 13174 / 8081) protein is Cysteine--tRNA ligase.